The sequence spans 1237 residues: Phosphorylase b kinase regulatory subunit alpha, skeletal muscle isoform (1237 aa).

A phosphoserine mark is found at Ser629, Ser729, Ser735, and Ser758. Positions 810 to 840 (LTELYGKVGKIRHWGLIRYISGILRKKVEAL) are calmodulin-binding. Phosphoserine; by autocatalysis is present on Ser972. Ser981 is subject to Phosphoserine. Phosphoserine; by autocatalysis occurs at positions 985 and 1007. A Phosphoserine; by PKA modification is found at Ser1018. 3 positions are modified to phosphoserine: Ser1020, Ser1023, and Ser1030. Positions 1021–1069 (TESQPNGGHSLGADLMSPSFLSPGTSVTPSSGSFPGHHTSKDSRQGQWQ) are disordered. A compositionally biased stretch (low complexity) spans 1042-1056 (SPGTSVTPSSGSFPG). A calmodulin-binding region spans residues 1060 to 1100 (SKDSRQGQWQRRRRLDGALNRVPIGFYQKVWKVLQKCHGLS). Ser1127 bears the Phosphoserine mark. The S-farnesyl cysteine moiety is linked to residue Cys1234.

This sequence belongs to the phosphorylase b kinase regulatory chain family. Hexadecamer of 4 heterotetramers, each composed of alpha, beta, gamma, and delta subunits. Alpha (PHKA1 or PHKA2) and beta (PHKB) are regulatory subunits, gamma (PHKG1 or PHKG2) is the catalytic subunit, and delta is calmodulin. Phosphorylation of Ser-1018 by PKA stimulates the dephosphorylation of the beta subunit and, thus, reverses the initial stimulation of PHK by the faster beta-subunit phosphorylation by PKA, that occurs in muscle in response to adrenaline. Post-translationally, cys-1234 is farnesylated, but the C-terminal tripeptide is not removed and the cysteine carboxyl is not methylated. As to expression, isoform 1 predominates in muscle, heart, brain and testis. Isoforms 1 and 2 are expressed in similar quantities in the other tissues. Isoform 3 is highly expressed in slow muscle and heart.

It localises to the cell membrane. Its pathway is glycan biosynthesis; glycogen metabolism. Its activity is regulated as follows. By phosphorylation of various serine residues and by calcium. Functionally, phosphorylase b kinase catalyzes the phosphorylation of serine in certain substrates, including troponin I. The alpha chain may bind calmodulin. The chain is Phosphorylase b kinase regulatory subunit alpha, skeletal muscle isoform (PHKA1) from Oryctolagus cuniculus (Rabbit).